A 197-amino-acid polypeptide reads, in one-letter code: Gastrula zinc finger protein XlCGF17.1 (197 aa).

7 consecutive C2H2-type zinc fingers follow at residues 6–28 (ISCS…QMTH), 34–56 (YSCS…QKIH), 62–84 (FSCS…HRTH), 90–112 (FFCS…RRTH), 118–140 (FSCS…YRTH), 146–169 (FSCS…RRSH), and 175–197 (FSCS…LRTH).

The protein belongs to the krueppel C2H2-type zinc-finger protein family.

Its subcellular location is the nucleus. In terms of biological role, may be involved in transcriptional regulation. The polypeptide is Gastrula zinc finger protein XlCGF17.1 (Xenopus laevis (African clawed frog)).